Reading from the N-terminus, the 554-residue chain is Malate synthase 2 (554 aa).

Arg-177 functions as the Proton acceptor in the catalytic mechanism. Asp-457 acts as the Proton donor in catalysis. The SKL peroxisome targeting motif motif lies at 552–554; that stretch reads SKL.

It belongs to the malate synthase family. Interacts with PEX9.

The protein localises to the peroxisome matrix. The catalysed reaction is glyoxylate + acetyl-CoA + H2O = (S)-malate + CoA + H(+). Functionally, allantoin metabolism-specific malate synthase involved in the recycling the glyoxylate generated during allantoin degradation by the ureidoglycollate (UG) hydrolase reaction. This Saccharomyces cerevisiae (strain ATCC 204508 / S288c) (Baker's yeast) protein is Malate synthase 2.